A 740-amino-acid polypeptide reads, in one-letter code: Elongation factor 2 (740 aa).

A tr-type G domain is found at 23–264 (AQIRNAGTLA…MIIEHVPPPN (242 aa)). Residues 32 to 39 (AHVDHGKT), 98 to 102 (DTPGH), and 152 to 155 (NKID) each bind GTP. Residue H605 is modified to Diphthamide.

Belongs to the TRAFAC class translation factor GTPase superfamily. Classic translation factor GTPase family. EF-G/EF-2 subfamily.

Its subcellular location is the cytoplasm. Functionally, catalyzes the GTP-dependent ribosomal translocation step during translation elongation. During this step, the ribosome changes from the pre-translocational (PRE) to the post-translocational (POST) state as the newly formed A-site-bound peptidyl-tRNA and P-site-bound deacylated tRNA move to the P and E sites, respectively. Catalyzes the coordinated movement of the two tRNA molecules, the mRNA and conformational changes in the ribosome. This chain is Elongation factor 2, found in Pyrobaculum islandicum (strain DSM 4184 / JCM 9189 / GEO3).